A 198-amino-acid polypeptide reads, in one-letter code: Capsid protein (198 aa).

It localises to the virion. The sequence is that of Capsid protein from Vitis vinifera (Grape).